We begin with the raw amino-acid sequence, 82 residues long: DinI-like protein (82 aa).

This sequence belongs to the DinI family.

The polypeptide is DinI-like protein (Enterobacteria phage VT1-Sakai).